The primary structure comprises 439 residues: tRNA-2-methylthio-N(6)-dimethylallyladenosine synthase (439 aa).

The 114-residue stretch at Lys2–Arg115 folds into the MTTase N-terminal domain. The [4Fe-4S] cluster site is built by Cys11, Cys47, Cys78, Cys155, Cys159, and Cys162. Positions Asn141–Glu372 constitute a Radical SAM core domain. One can recognise a TRAM domain in the interval Gln375 to His439.

This sequence belongs to the methylthiotransferase family. MiaB subfamily. Monomer. [4Fe-4S] cluster serves as cofactor.

It localises to the cytoplasm. It catalyses the reaction N(6)-dimethylallyladenosine(37) in tRNA + (sulfur carrier)-SH + AH2 + 2 S-adenosyl-L-methionine = 2-methylsulfanyl-N(6)-dimethylallyladenosine(37) in tRNA + (sulfur carrier)-H + 5'-deoxyadenosine + L-methionine + A + S-adenosyl-L-homocysteine + 2 H(+). Catalyzes the methylthiolation of N6-(dimethylallyl)adenosine (i(6)A), leading to the formation of 2-methylthio-N6-(dimethylallyl)adenosine (ms(2)i(6)A) at position 37 in tRNAs that read codons beginning with uridine. This is tRNA-2-methylthio-N(6)-dimethylallyladenosine synthase from Wolbachia pipientis wMel.